Consider the following 342-residue polypeptide: Phenylalanine--tRNA ligase alpha subunit (342 aa).

A Mg(2+)-binding site is contributed by Glu-260.

The protein belongs to the class-II aminoacyl-tRNA synthetase family. Phe-tRNA synthetase alpha subunit type 1 subfamily. In terms of assembly, tetramer of two alpha and two beta subunits. The cofactor is Mg(2+).

Its subcellular location is the cytoplasm. It catalyses the reaction tRNA(Phe) + L-phenylalanine + ATP = L-phenylalanyl-tRNA(Phe) + AMP + diphosphate + H(+). This is Phenylalanine--tRNA ligase alpha subunit from Nocardia farcinica (strain IFM 10152).